The chain runs to 166 residues: Small ribosomal subunit protein bS6 (166 aa).

Composition is skewed to basic and acidic residues over residues histidine 96–proline 142 and glycine 149–glutamate 166. The segment at histidine 96 to glutamate 166 is disordered.

It belongs to the bacterial ribosomal protein bS6 family.

Its function is as follows. Binds together with bS18 to 16S ribosomal RNA. The polypeptide is Small ribosomal subunit protein bS6 (Mesorhizobium japonicum (strain LMG 29417 / CECT 9101 / MAFF 303099) (Mesorhizobium loti (strain MAFF 303099))).